Consider the following 633-residue polypeptide: Carbon catabolite-derepressing protein kinase (633 aa).

Residues M1–S16 are compositionally biased toward low complexity. Residues M1–L46 form a disordered region. Basic residues predominate over residues S17–H32. Positions Y55–F306 constitute a Protein kinase domain. Residues L61–V69 and K84 contribute to the ATP site. Residue D177 is the Proton acceptor of the active site. T210 bears the Phosphothreonine; by autocatalysis mark. Positions Y313–L392 are auto-inhibitory domain (AID). The segment at P317–D345 is disordered. Basic and acidic residues predominate over residues L319–S337. Residues L348 to N389 form the UBA domain. Residues F409–A434 form a disordered region. S413 carries the phosphoserine modification. K461 is covalently cross-linked (Glycyl lysine isopeptide (Lys-Gly) (interchain with G-Cter in ubiquitin)). S487 bears the Phosphoserine mark. K549 participates in a covalent cross-link: Glycyl lysine isopeptide (Lys-Gly) (interchain with G-Cter in SUMO). S632 is subject to Phosphoserine.

Belongs to the protein kinase superfamily. CAMK Ser/Thr protein kinase family. SNF1 subfamily. As to quaternary structure, component of the AMP-activated protein kinase complex also known as the SNF1 kinase complex (Snf1c), a heterotrimeric complex composed of an alpha subunit (SNF1), a regulatory subunit beta (GAL83 and substoichiometric alternate beta subunits SIP1 and SIP2), and a regulatory subunit gamma (SNF4). Interacts with the transcriptional activator SIP4. Interacts with SAK1. Interacts with CTK1: Interacts with adenylate cyclase CYR1. Post-translationally, phosphorylation at Thr-210 in response to glucose limitation leads to activation of kinase activity. ADP, but not AMP, protects the enzyme from dephosphorylation at Thr-210 by GLC7. Sumoylation by the SUMO (E3) ligase MMS21 leads to inhibition by interaction of SUMO attached to Lys-549 with a SUMO-interacting sequence motif located near the active site of SNF1, and by targeting SNF1 for glucose-induced destruction via the SLX5-SLX8 (SUMO-directed) ubiquitin ligase.

It is found in the cytoplasm. It localises to the nucleus. The protein resides in the nucleus membrane. It carries out the reaction L-seryl-[protein] + ATP = O-phospho-L-seryl-[protein] + ADP + H(+). The enzyme catalyses L-threonyl-[protein] + ATP = O-phospho-L-threonyl-[protein] + ADP + H(+). Its activity is regulated as follows. The kinase activity is positively regulated by SNF4 via sequestration of the SNF1 auto-inhibitory domain (AID). Its function is as follows. Serine/threonine protein kinase essential for release from glucose repression. Catalytic subunit of the AMP-activated protein kinase complex also known as the SNF1 kinase complex (Snf1c), a central regulator of cellular energy homeostasis, which, in response to a fall in intracellular ATP levels, activates energy-producing pathways and inhibits energy-consuming processes. The complex phosphorylates histone H3 to form H3S10ph, which promotes H3K14ac formation, leading to transcriptional activation through TBP recruitment to the promoters. The complex also negatively regulates the HOG1 MAPK pathway in ER stress response including unfolded protein response (UPR). Under nutrient/energy depletion, the complex phosphorylates and activates PAS kinase PSK1 which in turn activates PBS1, leading to the inhibition of the TORC1 signaling pathway. SNF1 also interacts and phosphorylates adenylate cyclase CYR1 and negatively regulates the protein kinase A signaling pathway. Also phosphorylates and regulates the transcriptional activator CAT8. In Saccharomyces cerevisiae (strain ATCC 204508 / S288c) (Baker's yeast), this protein is Carbon catabolite-derepressing protein kinase.